Reading from the N-terminus, the 90-residue chain is Evasin P458 (90 aa).

The first 24 residues, 1–24, serve as a signal peptide directing secretion; it reads MEVKTFAFLQIAVLIAFSLHSASA. 3 disulfide bridges follow: C44–C63, C48–C65, and C59–C76. N47 carries N-linked (GlcNAc...) asparagine glycosylation.

It localises to the secreted. Functionally, salivary chemokine-binding protein which binds to host chemokines CXCL1, CXCL2, CXCL3, CXCL5, CXCL6 and CXCL13. This chain is Evasin P458, found in Ixodes ricinus (Common tick).